A 227-amino-acid polypeptide reads, in one-letter code: 2-C-methyl-D-erythritol 4-phosphate cytidylyltransferase (227 aa).

The protein belongs to the IspD/TarI cytidylyltransferase family. IspD subfamily.

The catalysed reaction is 2-C-methyl-D-erythritol 4-phosphate + CTP + H(+) = 4-CDP-2-C-methyl-D-erythritol + diphosphate. It participates in isoprenoid biosynthesis; isopentenyl diphosphate biosynthesis via DXP pathway; isopentenyl diphosphate from 1-deoxy-D-xylulose 5-phosphate: step 2/6. Catalyzes the formation of 4-diphosphocytidyl-2-C-methyl-D-erythritol from CTP and 2-C-methyl-D-erythritol 4-phosphate (MEP). This chain is 2-C-methyl-D-erythritol 4-phosphate cytidylyltransferase, found in Bordetella bronchiseptica (strain ATCC BAA-588 / NCTC 13252 / RB50) (Alcaligenes bronchisepticus).